Here is a 92-residue protein sequence, read N- to C-terminus: Integration host factor subunit beta (92 aa).

Belongs to the bacterial histone-like protein family. As to quaternary structure, heterodimer of an alpha and a beta chain.

In terms of biological role, this protein is one of the two subunits of integration host factor, a specific DNA-binding protein that functions in genetic recombination as well as in transcriptional and translational control. The protein is Integration host factor subunit beta of Vibrio cholerae serotype O1 (strain ATCC 39541 / Classical Ogawa 395 / O395).